Reading from the N-terminus, the 242-residue chain is Phosphoribosylaminoimidazole-succinocarboxamide synthase (242 aa).

Belongs to the SAICAR synthetase family.

The catalysed reaction is 5-amino-1-(5-phospho-D-ribosyl)imidazole-4-carboxylate + L-aspartate + ATP = (2S)-2-[5-amino-1-(5-phospho-beta-D-ribosyl)imidazole-4-carboxamido]succinate + ADP + phosphate + 2 H(+). The protein operates within purine metabolism; IMP biosynthesis via de novo pathway; 5-amino-1-(5-phospho-D-ribosyl)imidazole-4-carboxamide from 5-amino-1-(5-phospho-D-ribosyl)imidazole-4-carboxylate: step 1/2. The chain is Phosphoribosylaminoimidazole-succinocarboxamide synthase (purC) from Methanocaldococcus jannaschii (strain ATCC 43067 / DSM 2661 / JAL-1 / JCM 10045 / NBRC 100440) (Methanococcus jannaschii).